A 128-amino-acid chain; its full sequence is Azurin (128 aa).

The region spanning 1–128 (AECSVDIQGN…ALMKGTLTLK (128 aa)) is the Plastocyanin-like domain. Cysteine 3 and cysteine 26 are disulfide-bonded. Positions 46, 112, 117, and 121 each coordinate Cu cation.

The protein localises to the periplasm. Its function is as follows. Transfers electrons from cytochrome c551 to cytochrome oxidase. The chain is Azurin from Pseudomonas aeruginosa.